Consider the following 156-residue polypeptide: ADP-ribose 1''-phosphate phosphatase (156 aa).

The Macro domain occupies 1–156 (MIQYIKGDLF…DNLHFNVYVI (156 aa)). Substrate is bound by residues 7-9 (GDL), 25-27 (ACN), 32-37 (WGGGIA), and 127-133 (INAGIFG).

It belongs to the POA1 family.

It carries out the reaction ADP-alpha-D-ribose 1''-phosphate + H2O = ADP-D-ribose + phosphate. In terms of biological role, highly specific phosphatase involved in the metabolism of ADP-ribose 1''-phosphate (Appr1p) which is produced as a consequence of tRNA splicing. In Candida albicans (strain SC5314 / ATCC MYA-2876) (Yeast), this protein is ADP-ribose 1''-phosphate phosphatase (POA1).